The chain runs to 66 residues: DNA-directed RNA polymerase subunit Rpo10 (66 aa).

4 residues coordinate Zn(2+): cysteine 7, cysteine 10, cysteine 44, and cysteine 45.

This sequence belongs to the archaeal Rpo10/eukaryotic RPB10 RNA polymerase subunit family. Part of the RNA polymerase complex. The cofactor is Zn(2+).

The protein localises to the cytoplasm. The catalysed reaction is RNA(n) + a ribonucleoside 5'-triphosphate = RNA(n+1) + diphosphate. Its function is as follows. DNA-dependent RNA polymerase (RNAP) catalyzes the transcription of DNA into RNA using the four ribonucleoside triphosphates as substrates. This is DNA-directed RNA polymerase subunit Rpo10 from Hyperthermus butylicus (strain DSM 5456 / JCM 9403 / PLM1-5).